Consider the following 174-residue polypeptide: I-Kappa-B like protein C1 (174 aa).

ANK repeat units follow at residues 56–88 and 93–123; these read RGRQ…DINA and TGNS…NLGA.

This sequence belongs to the polydnaviridae I-Kappa-B-like protein family.

Functionally, suppresses the host immune response through NF-kappa-B inactivation. Possesses ankyrin repeat domains required for NF-kappa-B binding but lacks the regulatory regions required for dissociation from NF-kappa-B and degradation. Therefore, prevents host NF-kappa-B release and subsequent activation. This Microplitis demolitor bracovirus (isolate Webb) (MdBV) protein is I-Kappa-B like protein C1 (C1).